The following is a 283-amino-acid chain: Pantothenate synthetase (283 aa).

Position 30 to 37 (30 to 37 (MGNLHDAH)) interacts with ATP. The Proton donor role is filled by histidine 37. Residue glutamine 61 participates in (R)-pantoate binding. Position 61 (glutamine 61) interacts with beta-alanine. Residue 149–152 (GVKD) participates in ATP binding. Glutamine 155 contacts (R)-pantoate. Residues valine 178 and 186–189 (MSSR) contribute to the ATP site.

The protein belongs to the pantothenate synthetase family. In terms of assembly, homodimer.

The protein localises to the cytoplasm. It catalyses the reaction (R)-pantoate + beta-alanine + ATP = (R)-pantothenate + AMP + diphosphate + H(+). Its pathway is cofactor biosynthesis; (R)-pantothenate biosynthesis; (R)-pantothenate from (R)-pantoate and beta-alanine: step 1/1. Functionally, catalyzes the condensation of pantoate with beta-alanine in an ATP-dependent reaction via a pantoyl-adenylate intermediate. The sequence is that of Pantothenate synthetase from Cellvibrio japonicus (strain Ueda107) (Pseudomonas fluorescens subsp. cellulosa).